The chain runs to 292 residues: 4-hydroxy-tetrahydrodipicolinate synthase 2 (292 aa).

Threonine 46 is a pyruvate binding site. Residue tyrosine 134 is the Proton donor/acceptor of the active site. Catalysis depends on lysine 162, which acts as the Schiff-base intermediate with substrate. Valine 204 contributes to the pyruvate binding site.

This sequence belongs to the DapA family. As to quaternary structure, homotetramer; dimer of dimers.

The protein localises to the cytoplasm. It catalyses the reaction L-aspartate 4-semialdehyde + pyruvate = (2S,4S)-4-hydroxy-2,3,4,5-tetrahydrodipicolinate + H2O + H(+). Its pathway is amino-acid biosynthesis; L-lysine biosynthesis via DAP pathway; (S)-tetrahydrodipicolinate from L-aspartate: step 3/4. In terms of biological role, catalyzes the condensation of (S)-aspartate-beta-semialdehyde [(S)-ASA] and pyruvate to 4-hydroxy-tetrahydrodipicolinate (HTPA). The sequence is that of 4-hydroxy-tetrahydrodipicolinate synthase 2 from Halalkalibacterium halodurans (strain ATCC BAA-125 / DSM 18197 / FERM 7344 / JCM 9153 / C-125) (Bacillus halodurans).